We begin with the raw amino-acid sequence, 174 residues long: Endoribonuclease YbeY (174 aa).

3 residues coordinate Zn(2+): His-124, His-128, and His-134.

Belongs to the endoribonuclease YbeY family. Requires Zn(2+) as cofactor.

It localises to the cytoplasm. Single strand-specific metallo-endoribonuclease involved in late-stage 70S ribosome quality control and in maturation of the 3' terminus of the 16S rRNA. The sequence is that of Endoribonuclease YbeY from Synechococcus elongatus (strain ATCC 33912 / PCC 7942 / FACHB-805) (Anacystis nidulans R2).